Reading from the N-terminus, the 373-residue chain is Dual-specificity RNA methyltransferase RlmN (373 aa).

Residue glutamate 94 is the Proton acceptor of the active site. One can recognise a Radical SAM core domain in the interval 100 to 339; that stretch reads EDDRATLCVS…VIVRKTRGDD (240 aa). Residues cysteine 107 and cysteine 344 are joined by a disulfide bond. 3 residues coordinate [4Fe-4S] cluster: cysteine 114, cysteine 118, and cysteine 121. Residues 168–169, serine 200, 222–224, and asparagine 301 each bind S-adenosyl-L-methionine; these read GE and SIH. Catalysis depends on cysteine 344, which acts as the S-methylcysteine intermediate.

This sequence belongs to the radical SAM superfamily. RlmN family. Requires [4Fe-4S] cluster as cofactor.

It is found in the cytoplasm. It carries out the reaction adenosine(2503) in 23S rRNA + 2 reduced [2Fe-2S]-[ferredoxin] + 2 S-adenosyl-L-methionine = 2-methyladenosine(2503) in 23S rRNA + 5'-deoxyadenosine + L-methionine + 2 oxidized [2Fe-2S]-[ferredoxin] + S-adenosyl-L-homocysteine. It catalyses the reaction adenosine(37) in tRNA + 2 reduced [2Fe-2S]-[ferredoxin] + 2 S-adenosyl-L-methionine = 2-methyladenosine(37) in tRNA + 5'-deoxyadenosine + L-methionine + 2 oxidized [2Fe-2S]-[ferredoxin] + S-adenosyl-L-homocysteine. Its function is as follows. Specifically methylates position 2 of adenine 2503 in 23S rRNA and position 2 of adenine 37 in tRNAs. m2A2503 modification seems to play a crucial role in the proofreading step occurring at the peptidyl transferase center and thus would serve to optimize ribosomal fidelity. The sequence is that of Dual-specificity RNA methyltransferase RlmN from Shewanella baltica (strain OS223).